Here is a 146-residue protein sequence, read N- to C-terminus: Protein MGF 100-3L (146 aa).

It belongs to the asfivirus MGF 100 family.

Functionally, plays a role in virus cell tropism, and may be required for efficient virus replication in macrophages. This is Protein MGF 100-3L from Ornithodoros (relapsing fever ticks).